The following is a 520-amino-acid chain: MTKFSEFGLDEKIVKSVNRMGFEEATPIQEKTIPLGLEGKDLIGQAQTGTGKTAAFGLPMIHKIDQKSNNVQALIIAPTRELAIQVSEELYKLSYDKHVRVLAVYGGSDISRQIRSLKKNPQIVVGTPGRILDHINRRTLKLDHVETLVLDEADEMLNMGFIDDIETILKEVPAERQTLLFSATMPDPIRRIGERFMHSPELIRIKAKEMTALLIEQFFVKVHEKEKFDVLSRLLDVQAPELAIVFGRTKRRVDELSRALDMRGYVAEGIHGDLTQAKRMSVLRKFKEGKIDVLVATDVAARGLDISGVTHVYNYDIPQDPESYVHRIGRTGRAGKEGMAITFVQPREMGYLRIVEETTKKRMQPLQAPTWDEAFAGQLRVATEKIQEAITEENLADYKTFANELLEKYDATDIAAAMLKMLAKEPDKTPVHITEERPLPSRGGGGYKGKNGKGGKGGGYRGGSGKGGSYRDRNNSGKGRRSGGGSGGGSGSGGGGNRDRRGGGEQRSGGNKGNYSQKSK.

Residues 2–30 (TKFSEFGLDEKIVKSVNRMGFEEATPIQE) carry the Q motif motif. The 171-residue stretch at 33–203 (IPLGLEGKDL…ERFMHSPELI (171 aa)) folds into the Helicase ATP-binding domain. 46-53 (AQTGTGKT) provides a ligand contact to ATP. The DEAD box signature appears at 151–154 (DEAD). A Helicase C-terminal domain is found at 214-374 (LIEQFFVKVH…PLQAPTWDEA (161 aa)). Residues 428 to 439 (KTPVHITEERPL) are compositionally biased toward basic and acidic residues. Residues 428 to 520 (KTPVHITEER…NKGNYSQKSK (93 aa)) form a disordered region. 2 stretches are compositionally biased toward gly residues: residues 442-468 (RGGGGYKGKNGKGGKGGGYRGGSGKGG) and 482-496 (SGGGSGGGSGSGGGG).

It belongs to the DEAD box helicase family. CshA subfamily. Oligomerizes, may be a member of the RNA degradosome.

The protein localises to the cytoplasm. The catalysed reaction is ATP + H2O = ADP + phosphate + H(+). DEAD-box RNA helicase possibly involved in RNA degradation. Unwinds dsRNA in both 5'- and 3'-directions, has RNA-dependent ATPase activity. Involved in cold tolerance, motility and alcohol tolerance. The chain is ATP-dependent RNA helicase CshA from Listeria monocytogenes serovar 1/2a (strain ATCC BAA-679 / EGD-e).